Here is a 153-residue protein sequence, read N- to C-terminus: Putative riboflavin kinase (153 aa).

Thr-28 and Asn-30 together coordinate Mg(2+). The active-site Nucleophile is Glu-80.

In terms of assembly, monomer. The cofactor is Zn(2+). Mg(2+) is required as a cofactor.

It is found in the cytoplasm. It carries out the reaction riboflavin + ATP = FMN + ADP + H(+). It participates in cofactor biosynthesis; FMN biosynthesis; FMN from riboflavin (ATP route): step 1/1. In terms of biological role, catalyzes the phosphorylation of riboflavin (vitamin B2) to form flavin-mononucleotide (FMN). The sequence is that of Putative riboflavin kinase from Drosophila melanogaster (Fruit fly).